Here is a 401-residue protein sequence, read N- to C-terminus: Formate-dependent phosphoribosylglycinamide formyltransferase (401 aa).

N(1)-(5-phospho-beta-D-ribosyl)glycinamide is bound by residues Glu22 to Leu23 and Glu82. ATP-binding positions include Arg115, Lys157, Ser162–Gln167, Glu197–Ile200, and Glu205. One can recognise an ATP-grasp domain in the interval Arg120 to Leu315. Residues Glu274 and Glu286 each contribute to the Mg(2+) site. N(1)-(5-phospho-beta-D-ribosyl)glycinamide contacts are provided by residues Asp293, Lys362, and Arg369–Arg370.

This sequence belongs to the PurK/PurT family. In terms of assembly, homodimer.

The catalysed reaction is N(1)-(5-phospho-beta-D-ribosyl)glycinamide + formate + ATP = N(2)-formyl-N(1)-(5-phospho-beta-D-ribosyl)glycinamide + ADP + phosphate + H(+). The protein operates within purine metabolism; IMP biosynthesis via de novo pathway; N(2)-formyl-N(1)-(5-phospho-D-ribosyl)glycinamide from N(1)-(5-phospho-D-ribosyl)glycinamide (formate route): step 1/1. Involved in the de novo purine biosynthesis. Catalyzes the transfer of formate to 5-phospho-ribosyl-glycinamide (GAR), producing 5-phospho-ribosyl-N-formylglycinamide (FGAR). Formate is provided by PurU via hydrolysis of 10-formyl-tetrahydrofolate. The polypeptide is Formate-dependent phosphoribosylglycinamide formyltransferase (Cupriavidus pinatubonensis (strain JMP 134 / LMG 1197) (Cupriavidus necator (strain JMP 134))).